Here is a 317-residue protein sequence, read N- to C-terminus: 4-hydroxy-3-methylbut-2-enyl diphosphate reductase (317 aa).

Cys-12 lines the [4Fe-4S] cluster pocket. (2E)-4-hydroxy-3-methylbut-2-enyl diphosphate is bound by residues His-41 and His-74. Dimethylallyl diphosphate is bound by residues His-41 and His-74. Positions 41 and 74 each coordinate isopentenyl diphosphate. Cys-96 lines the [4Fe-4S] cluster pocket. His-124 is a (2E)-4-hydroxy-3-methylbut-2-enyl diphosphate binding site. His-124 serves as a coordination point for dimethylallyl diphosphate. His-124 provides a ligand contact to isopentenyl diphosphate. The active-site Proton donor is the Glu-126. Thr-168 is a binding site for (2E)-4-hydroxy-3-methylbut-2-enyl diphosphate. [4Fe-4S] cluster is bound at residue Cys-198. Positions 226, 227, 228, and 270 each coordinate (2E)-4-hydroxy-3-methylbut-2-enyl diphosphate. Dimethylallyl diphosphate-binding residues include Ser-226, Ser-227, Asn-228, and Ser-270. Positions 226, 227, 228, and 270 each coordinate isopentenyl diphosphate.

Belongs to the IspH family. Requires [4Fe-4S] cluster as cofactor.

The enzyme catalyses isopentenyl diphosphate + 2 oxidized [2Fe-2S]-[ferredoxin] + H2O = (2E)-4-hydroxy-3-methylbut-2-enyl diphosphate + 2 reduced [2Fe-2S]-[ferredoxin] + 2 H(+). It catalyses the reaction dimethylallyl diphosphate + 2 oxidized [2Fe-2S]-[ferredoxin] + H2O = (2E)-4-hydroxy-3-methylbut-2-enyl diphosphate + 2 reduced [2Fe-2S]-[ferredoxin] + 2 H(+). It functions in the pathway isoprenoid biosynthesis; dimethylallyl diphosphate biosynthesis; dimethylallyl diphosphate from (2E)-4-hydroxy-3-methylbutenyl diphosphate: step 1/1. Its pathway is isoprenoid biosynthesis; isopentenyl diphosphate biosynthesis via DXP pathway; isopentenyl diphosphate from 1-deoxy-D-xylulose 5-phosphate: step 6/6. In terms of biological role, catalyzes the conversion of 1-hydroxy-2-methyl-2-(E)-butenyl 4-diphosphate (HMBPP) into a mixture of isopentenyl diphosphate (IPP) and dimethylallyl diphosphate (DMAPP). Acts in the terminal step of the DOXP/MEP pathway for isoprenoid precursor biosynthesis. The sequence is that of 4-hydroxy-3-methylbut-2-enyl diphosphate reductase from Hahella chejuensis (strain KCTC 2396).